Consider the following 290-residue polypeptide: Taxis protein CheF1 (290 aa).

As to quaternary structure, interacts with chemotaxis (Che) proteins as well as flagella accessory (Fla) proteins.

Functionally, involved in taxis signal transduction. Essential for the ability to control the direction of flagellar rotation. May have a role between CheY and the flagellum. In Halobacterium salinarum (strain ATCC 29341 / DSM 671 / R1), this protein is Taxis protein CheF1 (cheF1).